A 34-amino-acid polypeptide reads, in one-letter code: Potassium channel toxin alpha-KTx 6.3 (34 aa).

4 cysteine pairs are disulfide-bonded: Cys-3–Cys-24, Cys-9–Cys-29, Cys-13–Cys-31, and Cys-19–Cys-34. Cys-34 bears the Cysteine amide mark.

The protein belongs to the short scorpion toxin superfamily. Potassium channel inhibitor family. Alpha-KTx 06 subfamily. Amidated. The amidated toxin shows 5-fold more affinity for Kv1.3/KCNA3 than the synthetic carboxylated form. Expressed by the venom gland.

The protein resides in the secreted. In terms of biological role, potently blocks voltage-gated potassium channels Kv1.1/KCNA1 (IC(50)=7-11 nM) and Kv1.3/KCNA3 (IC(50)=11-29 pM). Also mildly blocks intermediate (IK) conductance calcium-activated potassium channels (KCa3.1/KCNN4) and ERG1/Kv11.1/KCNH2. Shows ability to suppress proliferation of lymphocytes, which are known to be sensitive to Kv1.3/KCNA3 homotetrameric channel block. This is Potassium channel toxin alpha-KTx 6.3 from Heterometrus spinifer (Asia giant forest scorpion).